The sequence spans 215 residues: Probable Rab-related GTPase (215 aa).

20-27 (GSSGVGKS) contributes to the GTP binding site. An Effector region motif is present at residues 42–50 (VSPTIGAAF). GTP contacts are provided by residues 69–73 (DTAGQ) and 127–130 (NKID). Residues cysteine 211 and cysteine 212 are each lipidated (S-geranylgeranyl cysteine; by host). Cysteine 212 bears the Cysteine methyl ester; by host mark. A propeptide spans 213-215 (YIS) (removed in mature form).

The protein belongs to the small GTPase superfamily. Rab family.

Its subcellular location is the host cell membrane. Functionally, may be involved in protein transport. This chain is Probable Rab-related GTPase, found in Acanthamoeba polyphaga mimivirus (APMV).